A 118-amino-acid polypeptide reads, in one-letter code: Large ribosomal subunit protein bL21c (118 aa).

The protein belongs to the bacterial ribosomal protein bL21 family. Part of the 50S ribosomal subunit.

It is found in the plastid. It localises to the chloroplast. This protein binds to 23S rRNA. In Anthoceros angustus (Hornwort), this protein is Large ribosomal subunit protein bL21c.